A 96-amino-acid polypeptide reads, in one-letter code: Small ribosomal subunit protein bS18 (96 aa).

A compositionally biased stretch (basic and acidic residues) spans 1 to 22 (MYKDIDSHQRDSRTDGHQDGFK). Positions 1 to 25 (MYKDIDSHQRDSRTDGHQDGFKKNP) are disordered.

Belongs to the bacterial ribosomal protein bS18 family. In terms of assembly, part of the 30S ribosomal subunit. Forms a tight heterodimer with protein bS6.

In terms of biological role, binds as a heterodimer with protein bS6 to the central domain of the 16S rRNA, where it helps stabilize the platform of the 30S subunit. The sequence is that of Small ribosomal subunit protein bS18 from Borrelia duttonii (strain Ly).